A 253-amino-acid chain; its full sequence is Flap endonuclease Xni (253 aa).

A Mg(2+)-binding site is contributed by D104. The region spanning V160–N250 is the 5'-3' exonuclease domain. K(+)-binding residues include L171, A172, P180, I182, and I185. Residues G184–T189 form an interaction with DNA region.

This sequence belongs to the Xni family. Requires Mg(2+) as cofactor. The cofactor is K(+).

Has flap endonuclease activity. During DNA replication, flap endonucleases cleave the 5'-overhanging flap structure that is generated by displacement synthesis when DNA polymerase encounters the 5'-end of a downstream Okazaki fragment. In Edwardsiella ictaluri (strain 93-146), this protein is Flap endonuclease Xni.